The sequence spans 349 residues: Holliday junction branch migration complex subunit RuvB (349 aa).

The segment at 1–186 is large ATPase domain (RuvB-L); that stretch reads MSEDYLDRDV…FGFTAHMDFY (186 aa). Residues L25, R26, G67, K70, T71, S72, 133–135, R176, Y186, and R223 each bind ATP; that span reads EDF. T71 contributes to the Mg(2+) binding site. The interval 187–257 is small ATPAse domain (RuvB-S); it reads EPTELEGVLA…VAKAALAVYD (71 aa). Positions 260–349 are head domain (RuvB-H); the sequence is ELGLDRLDRA…GLSQPGLFES (90 aa). DNA contacts are provided by R315 and R320.

Belongs to the RuvB family. In terms of assembly, homohexamer. Forms an RuvA(8)-RuvB(12)-Holliday junction (HJ) complex. HJ DNA is sandwiched between 2 RuvA tetramers; dsDNA enters through RuvA and exits via RuvB. An RuvB hexamer assembles on each DNA strand where it exits the tetramer. Each RuvB hexamer is contacted by two RuvA subunits (via domain III) on 2 adjacent RuvB subunits; this complex drives branch migration. In the full resolvosome a probable DNA-RuvA(4)-RuvB(12)-RuvC(2) complex forms which resolves the HJ.

Its subcellular location is the cytoplasm. It carries out the reaction ATP + H2O = ADP + phosphate + H(+). Functionally, the RuvA-RuvB-RuvC complex processes Holliday junction (HJ) DNA during genetic recombination and DNA repair, while the RuvA-RuvB complex plays an important role in the rescue of blocked DNA replication forks via replication fork reversal (RFR). RuvA specifically binds to HJ cruciform DNA, conferring on it an open structure. The RuvB hexamer acts as an ATP-dependent pump, pulling dsDNA into and through the RuvAB complex. RuvB forms 2 homohexamers on either side of HJ DNA bound by 1 or 2 RuvA tetramers; 4 subunits per hexamer contact DNA at a time. Coordinated motions by a converter formed by DNA-disengaged RuvB subunits stimulates ATP hydrolysis and nucleotide exchange. Immobilization of the converter enables RuvB to convert the ATP-contained energy into a lever motion, pulling 2 nucleotides of DNA out of the RuvA tetramer per ATP hydrolyzed, thus driving DNA branch migration. The RuvB motors rotate together with the DNA substrate, which together with the progressing nucleotide cycle form the mechanistic basis for DNA recombination by continuous HJ branch migration. Branch migration allows RuvC to scan DNA until it finds its consensus sequence, where it cleaves and resolves cruciform DNA. This chain is Holliday junction branch migration complex subunit RuvB, found in Mycobacterium leprae (strain Br4923).